The chain runs to 299 residues: HTH-type transcriptional repressor CarH (299 aa).

Residues 5-74 (TYRINIAAEL…ISEAAKLLPQ (70 aa)) form the HTH merR-type domain. A DNA-binding region (H-T-H motif) is located at residues 8–27 (INIAAELAGVRVELIRAWER). Residues 180-299 (HRHGVLACFP…EEDWDRLAGT (120 aa)) form the B12-binding domain.

This sequence belongs to the CarA/CarH B12-binding photoregulator family. Forms oligomers. Interacts with CarS.

With respect to regulation, requires cobalamin (vitamin B12) for repressor activity. In the dark, binding of cobalamin to CarH induces its oligomerization, which enhances binding to the DNA and repressor activity. Light causes cobalamin photolysis and disruption of the cobalamin-CarH complex, which decreases interaction with DNA and allows transcription of the carB operon. Interaction with CarS also prevents binding to DNA. Functionally, negative regulator of the carB operon in the dark. Binds specifically to the CarA operator, in the region around the carB promoter, which blocks access to the RNA polymerase. The chain is HTH-type transcriptional repressor CarH (carH) from Myxococcus xanthus.